A 223-amino-acid chain; its full sequence is RNA-free ribonuclease P (223 aa).

It belongs to the HARP family.

The catalysed reaction is Endonucleolytic cleavage of RNA, removing 5'-extranucleotides from tRNA precursor.. Its function is as follows. RNA-free RNase P that catalyzes the removal of the 5'-leader sequence from pre-tRNA to produce the mature 5'-terminus. The sequence is that of RNA-free ribonuclease P from Methanococcus maripaludis (strain C5 / ATCC BAA-1333).